Reading from the N-terminus, the 175-residue chain is NADH-quinone oxidoreductase subunit B (175 aa).

[4Fe-4S] cluster contacts are provided by C54, C55, C119, and C149.

This sequence belongs to the complex I 20 kDa subunit family. As to quaternary structure, NDH-1 is composed of at least 14 different subunits, Nqo1 to Nqo14. The complex has a L-shaped structure, with the hydrophobic arm (subunits Nqo7, Nqo8, Nqo10 to Nqo14) embedded in the inner membrane and the hydrophilic peripheral arm (subunits Nqo1 to Nqo6, Nqo9) protruding into the bacterial cytoplasm. The hydrophilic domain contains all the redox centers. NADH-quinone oxidoreductase forms a supercomplex with ubiquinol-cytochrome c reductase complex (complex III or cytochrome b-c1 complex) and cytochrome c oxidase (complex IV), which stabilizes the NADH-quinone oxidoreductase complex. Requires [4Fe-4S] cluster as cofactor.

Its subcellular location is the cell inner membrane. The catalysed reaction is a quinone + NADH + 5 H(+)(in) = a quinol + NAD(+) + 4 H(+)(out). NDH-1 shuttles electrons from NADH, via FMN and iron-sulfur (Fe-S) centers, to quinones in the respiratory chain. The immediate electron acceptor for the enzyme in this species is believed to be ubiquinone. Couples the redox reaction to proton translocation (for every two electrons transferred, four hydrogen ions are translocated across the cytoplasmic membrane), and thus conserves the redox energy in a proton gradient. The polypeptide is NADH-quinone oxidoreductase subunit B (Paracoccus denitrificans (strain Pd 1222)).